We begin with the raw amino-acid sequence, 228 residues long: Ribosomal RNA small subunit methyltransferase G (228 aa).

S-adenosyl-L-methionine is bound by residues G89, L94, 140-141 (VE), and R159.

Belongs to the methyltransferase superfamily. RNA methyltransferase RsmG family.

It is found in the cytoplasm. The catalysed reaction is guanosine(527) in 16S rRNA + S-adenosyl-L-methionine = N(7)-methylguanosine(527) in 16S rRNA + S-adenosyl-L-homocysteine. Functionally, specifically methylates the N7 position of guanine in position 527 of 16S rRNA. The chain is Ribosomal RNA small subunit methyltransferase G from Burkholderia cenocepacia (strain ATCC BAA-245 / DSM 16553 / LMG 16656 / NCTC 13227 / J2315 / CF5610) (Burkholderia cepacia (strain J2315)).